Consider the following 679-residue polypeptide: Methionine--tRNA ligase (679 aa).

The 'HIGH' region motif lies at 14 to 24; sequence PYANGSIHLGH. 4 residues coordinate Zn(2+): C145, C148, C158, and C161. A 'KMSKS' region motif is present at residues 331–335; sequence KMSKS. K334 serves as a coordination point for ATP. Residues 577-679 enclose the tRNA-binding domain; it reads TFAAVDLRVA…SGAKPGQRIK (103 aa).

The protein belongs to the class-I aminoacyl-tRNA synthetase family. MetG type 1 subfamily. In terms of assembly, homodimer. It depends on Zn(2+) as a cofactor.

The protein localises to the cytoplasm. The catalysed reaction is tRNA(Met) + L-methionine + ATP = L-methionyl-tRNA(Met) + AMP + diphosphate. Its function is as follows. Is required not only for elongation of protein synthesis but also for the initiation of all mRNA translation through initiator tRNA(fMet) aminoacylation. This chain is Methionine--tRNA ligase, found in Pseudomonas putida (strain ATCC 47054 / DSM 6125 / CFBP 8728 / NCIMB 11950 / KT2440).